The chain runs to 411 residues: Metacaspase-1B (411 aa).

The segment at 1 to 97 (MYHRHSAPPP…PPLEAQQFGN (97 aa)) is disordered. Over residues 7–65 (APPPPGRSRGYPPPQQQWPPQPYQYLPYPPQGPPPAHTFPPPAHRSYPSPYPTPPPHSP) the composition is skewed to pro residues. Residues histidine 198 and cysteine 254 contribute to the active site.

The protein belongs to the peptidase C14B family.

Involved in cell death (apoptosis). This Neosartorya fischeri (strain ATCC 1020 / DSM 3700 / CBS 544.65 / FGSC A1164 / JCM 1740 / NRRL 181 / WB 181) (Aspergillus fischerianus) protein is Metacaspase-1B (casB).